The following is a 129-amino-acid chain: Phenazine antibiotic resistance protein EhpR (129 aa).

A VOC domain is found at 10-128; sequence TPNLQLVYVS…DGHIIRVCPL (119 aa). Residues 42–43 and Trp57 each bind D-alanylgriseoluteate; that span reads RY.

As to quaternary structure, homodimer.

In terms of biological role, required for resistance to the phenazine antibiotic D-alanylgriseoluteic acid (AGA), an antibiotic produced by E.agglomerans itself, and thus protects the bacterium against phenazine toxicity. Probably binds AGA and acts as a chaperone that works in tandem with a membrane transporter for subsequent antibiotic secretion. The chain is Phenazine antibiotic resistance protein EhpR from Enterobacter agglomerans (Erwinia herbicola).